A 482-amino-acid polypeptide reads, in one-letter code: MSKVLTSLPAGERVGIAFSGGLDTSVAVAWMRDKGAVPCTYTADIGQYDEPDIASVPSRASAYGAEITRLVDCRAALVEEGLAALACGAFHIRSGGRPYFNTTPLGRAVTGTLLVRAMLEDGVQIWGDGSTFKGNDIERFYRYGLLANPHLRIYKPWLDADFVTELGGRKEMSEWLLAHGLPYRDSTEKAYSTDANIWGATHEAKTLEHLDTGIETVDPIMGVRFWDPSVEIATEDVTVGFEQGRPVSINGKEFASAVDLVMEANAIGGRHGLGMSDQIENRIIEAKSRGIYEAPGMALLHIVYERLVNAIHNEDTLAAYHNEGRRLGRLMYEGRWLDPQALMIRESLQRWVGTAVTGEVTLRLRRGEDYSILDTTGPAFSYHPDKLSMERTEDSAFGPVDRIGQLTMRNLDIADSRARLEQYVGLGLVGTPHPTPIGAAQAAATGLIGAMDEGGAEAIASRGEATDEETMLDRAAMESGTD.

ATP-binding positions include 17-25 and A43; that span reads AFSGGLDTS. Y99 is a binding site for L-citrulline. Residues G129 and T131 each coordinate ATP. T131, N135, and D136 together coordinate L-aspartate. N135 is an L-citrulline binding site. D136 serves as a coordination point for ATP. 2 residues coordinate L-citrulline: R139 and S192. D194 provides a ligand contact to ATP. Residues T201, E203, and E280 each contribute to the L-citrulline site. The segment at 461–482 is disordered; that stretch reads SRGEATDEETMLDRAAMESGTD.

It belongs to the argininosuccinate synthase family. Type 2 subfamily. In terms of assembly, homotetramer.

The protein resides in the cytoplasm. It catalyses the reaction L-citrulline + L-aspartate + ATP = 2-(N(omega)-L-arginino)succinate + AMP + diphosphate + H(+). Its pathway is amino-acid biosynthesis; L-arginine biosynthesis; L-arginine from L-ornithine and carbamoyl phosphate: step 2/3. This chain is Argininosuccinate synthase (argG), found in Streptomyces lavendulae.